A 304-amino-acid polypeptide reads, in one-letter code: 33 kDa chaperonin (304 aa).

Cystine bridges form between Cys245-Cys247 and Cys278-Cys281.

It belongs to the HSP33 family. Post-translationally, under oxidizing conditions two disulfide bonds are formed involving the reactive cysteines. Under reducing conditions zinc is bound to the reactive cysteines and the protein is inactive.

It localises to the cytoplasm. In terms of biological role, redox regulated molecular chaperone. Protects both thermally unfolding and oxidatively damaged proteins from irreversible aggregation. Plays an important role in the bacterial defense system toward oxidative stress. The polypeptide is 33 kDa chaperonin (Microcystis aeruginosa (strain NIES-843 / IAM M-2473)).